The sequence spans 147 residues: Transthyretin (147 aa).

The N-terminal stretch at 1–20 (MASFRLFLLCLAGLVFVSEA) is a signal peptide. C30 carries the sulfocysteine modification. K35 serves as a coordination point for L-thyroxine. Position 62 is a 4-carboxyglutamate (E62). A Phosphoserine modification is found at S72. An L-thyroxine-binding site is contributed by E74. N-linked (GlcNAc...) asparagine glycosylation is present at N118. An L-thyroxine-binding site is contributed by S137.

This sequence belongs to the transthyretin family. Homotetramer. Dimer of dimers. In the homotetramer, subunits assemble around a central channel that can accommodate two ligand molecules. Interacts with RBP4. In terms of processing, sulfonation of the reactive cysteine Cys-30 enhances the stability of the native conformation of TTR, avoiding misassembly of the protein leading to amyloid formation. As to expression, detected in serum (at protein level).

The protein resides in the secreted. Thyroid hormone-binding protein. Probably transports thyroxine from the bloodstream to the brain. The sequence is that of Transthyretin (TTR) from Bos taurus (Bovine).